The following is a 2111-amino-acid chain: Mycocerosic acid synthase-like polyketide synthase (2111 aa).

The first 15 residues, 1–15 (MTQNCVAPVAIIGMA), serve as a signal peptide directing secretion. Cys16 carries N-palmitoyl cysteine lipidation. A lipid anchor (S-diacylglycerol cysteine) is attached at Cys16. The Ketosynthase family 3 (KS3) domain occupies 16-428 (CRLPGAINSP…GTNVHAVLEQ (413 aa)). Catalysis depends on Cys178, which acts as the Acyl-thioester intermediate; for beta-ketoacyl synthase activity. Active-site for beta-ketoacyl synthase activity residues include His313 and His349. A linker domain (LD) region spans residues 430-537 (PESPAETAAE…MPQQAVTNDD (108 aa)). The interval 538-837 (RGPVWVFSGQ…LAVFAAMRRQ (300 aa)) is acyltransferase (AT). Ser629 (acyl-ester intermediate; for acyltransferase activity) is an active-site residue. The dehydratase (DH) stretch occupies residues 896–1176 (PSVSVHPLLG…LSAMGLQLGT (281 aa)). The segment at 901–1025 (HPLLGSHVVL…GDVDAERPAA (125 aa)) is N-terminal hotdog fold. A PKS/mFAS DH domain is found at 901–1183 (HPLLGSHVVL…LGTGNSDKAE (283 aa)). His934 serves as the catalytic Proton acceptor; for dehydratase activity. The tract at residues 1036 to 1183 (PNRVDGDELR…LGTGNSDKAE (148 aa)) is C-terminal hotdog fold. Asp1100 (proton donor; for dehydratase activity) is an active-site residue. The interval 1215 to 1391 (SWLVILAGDD…SPEDETAWRD (177 aa)) is pseudo beta-ketoacyl reductase (PsiKR). The segment at 1419–1743 (EGMRLVVRNP…QHTGKLVIDI (325 aa)) is enoylreductase (ER). Residues 1765–2008 (GAYVITGGLG…RSPFAELFLA (244 aa)) are beta-ketoacyl reductase (KR). Residues 1773–1776 (LGGL), 1796–1799 (SRSA), 1824–1825 (DI), and 1902–1903 (FS) each bind NADP(+). The region spanning 2029-2104 (EEWPTHLRRL…QRLCEMLDTD (76 aa)) is the Carrier domain. The residue at position 2064 (Ser2064) is an O-(pantetheine 4'-phosphoryl)serine.

Homodimer.

The protein resides in the cell membrane. It functions in the pathway lipid metabolism; fatty acid biosynthesis. Polyketide synthase involved in the biosynthesis of 2,4-dimethyl-2-eicosenoic acid, a lipid component of the lipooligosaccharides (LOS) which are not located at the bacterial surface but rather in deeper compartments of the cell envelope of M.smegmatis. This Mycolicibacterium smegmatis (strain ATCC 700084 / mc(2)155) (Mycobacterium smegmatis) protein is Mycocerosic acid synthase-like polyketide synthase.